We begin with the raw amino-acid sequence, 233 residues long: MSNLNNLRHKLQNGLIASCQPVPGSAMDTPEIVAAMACAALAGGAVGLRIEGINNIRAVRRATDAPIIGIIKRDLPDSEVRITPWLEDIDALSAAGADIIAFDVTCRERPVSVADLYQRARATGCLTMADASNIDDGLLAHHLGIDFIGTTLSGYTQATVPTEPDLALVTQLAQAGCRVIAEGRYHSPALAAAAISAGAYAVTVGSAITRIEHICGWFCDAIKQCETEKLTEY.

It belongs to the NanE family.

The enzyme catalyses an N-acyl-D-glucosamine 6-phosphate = an N-acyl-D-mannosamine 6-phosphate. Its pathway is amino-sugar metabolism; N-acetylneuraminate degradation; D-fructose 6-phosphate from N-acetylneuraminate: step 3/5. Its function is as follows. Converts N-acetylmannosamine-6-phosphate (ManNAc-6-P) to N-acetylglucosamine-6-phosphate (GlcNAc-6-P). The chain is Putative N-acetylmannosamine-6-phosphate 2-epimerase from Yersinia pseudotuberculosis serotype O:3 (strain YPIII).